A 143-amino-acid chain; its full sequence is Alpha-amylase/trypsin inhibitor CM16 (143 aa).

Residues M1–A24 form the signal peptide.

The protein belongs to the protease inhibitor I6 (cereal trypsin/alpha-amylase inhibitor) family. As to quaternary structure, subunit of the tetrameric inhibitor. In terms of processing, five disulfide bonds, which are essential for the inhibitor activity, are probably present. Developing endosperm.

The protein resides in the secreted. In terms of biological role, alpha-amylase/trypsin inhibitor. It could be involved in insect defense mechanisms. The polypeptide is Alpha-amylase/trypsin inhibitor CM16 (Triticum aestivum (Wheat)).